The following is a 563-amino-acid chain: Probable tRNA (uracil-O(2)-)-methyltransferase (563 aa).

The C3H1-type zinc-finger motif lies at 536–563 (TIRKAPCWMSLHHPDGCPVGQEACRYEH).

It belongs to the TRM44 family.

It localises to the cytoplasm. It carries out the reaction uridine(44) in tRNA(Ser) + S-adenosyl-L-methionine = 2'-O-methyluridine(44) in tRNA(Ser) + S-adenosyl-L-homocysteine + H(+). Its function is as follows. Probable adenosyl-L-methionine (AdoMet)-dependent tRNA (uracil-O(2)-)-methyltransferase. This chain is Probable tRNA (uracil-O(2)-)-methyltransferase, found in Caenorhabditis elegans.